A 466-amino-acid chain; its full sequence is Acetyl-coenzyme A carboxylase carboxyl transferase subunit beta, chloroplastic (466 aa).

The 269-residue stretch at 198-466 (LWIQCENCYE…FPLNQNSIGQ (269 aa)) folds into the CoA carboxyltransferase N-terminal domain. The Zn(2+) site is built by Cys202, Cys205, Cys221, and Cys224. A C4-type zinc finger spans residues 202–224 (CENCYELNYKKLLKSKMRICDEC).

The protein belongs to the AccD/PCCB family. As to quaternary structure, acetyl-CoA carboxylase is a heterohexamer composed of biotin carboxyl carrier protein, biotin carboxylase and 2 subunits each of ACCase subunit alpha and ACCase plastid-coded subunit beta (accD). Zn(2+) serves as cofactor.

The protein localises to the plastid. It is found in the chloroplast stroma. It catalyses the reaction N(6)-carboxybiotinyl-L-lysyl-[protein] + acetyl-CoA = N(6)-biotinyl-L-lysyl-[protein] + malonyl-CoA. It participates in lipid metabolism; malonyl-CoA biosynthesis; malonyl-CoA from acetyl-CoA: step 1/1. Functionally, component of the acetyl coenzyme A carboxylase (ACC) complex. Biotin carboxylase (BC) catalyzes the carboxylation of biotin on its carrier protein (BCCP) and then the CO(2) group is transferred by the transcarboxylase to acetyl-CoA to form malonyl-CoA. The chain is Acetyl-coenzyme A carboxylase carboxyl transferase subunit beta, chloroplastic from Fagopyrum esculentum subsp. ancestrale (Wild buckwheat).